A 744-amino-acid chain; its full sequence is MSEITPEVVESHGLSSEEYDVILKALGREPNLVELGIFSVMWSEHCSYKSSRLHLKKLPTEAPWVICGPGENAGVIDIGDGHAAIFKMESHNHPSYIEPYQGAATGVGGILRDVFTMGARPVANANALRFGRPEHPKMKHLVQGVVAGIGGYGNCVGVPTVCGETNFHPAYDGNILVNAMTVGVADTDKIFYSAATGVGNPIVYVGSKTGRDGIHGATMASTDFEEDSDAKRPTVQVGDPFTEKLLIEACLELMATDAIVAIQDMGAAGLTSSSVEMATNGKTGIRLDMDKVPCREEGMTPYEMMLSESQERMLMVLKPGKEEMAAEIFKKWELDFAVIGEVTDTQRMVLEFGGEVVCDIPLGPLADEAPLYDRPTISLEEYKAWAKIAPITDAPDSADPGADLLKLMASPNLASRAWIAEQYDSQVGADTLQTGGDAGVVRVHGTKKALAISTDCTPRYCYADPYEGGKQAIAEAYRNLCAVGARPLAVTNCLNFANPQRPEIMTQLVEALRGMGDACRMLDFPIVSGNVSLYNESKATGGGSAILPTPAIGGVGIIDDYERMMTMGFKNAGDTIYLVGPEFWATPDPTRSHLGKSLWLDVVHGRDEGRTPPTDLVVERNAGKIIHELIDDGLVNAVHDVSDGGLAVALAEMALSGGTGADVEQNSEYTAAQWWFGEDQGRYVVTVPDTEALNEALSKGTENAETAQIGFRRIGTVGGDGLLGVSLADLREAHASFFREWMEV.

Residue His-45 is part of the active site. 2 residues coordinate ATP: Tyr-48 and Lys-87. Residue Glu-89 participates in Mg(2+) binding. Residues 90-93 and Arg-112 contribute to the substrate site; that span reads SHNH. His-91 acts as the Proton acceptor in catalysis. Asp-113 provides a ligand contact to Mg(2+). Substrate is bound at residue Gln-236. A Mg(2+)-binding site is contributed by Asp-264. 308–310 is a binding site for substrate; sequence ESQ. Residues Asn-492 and Gly-529 each contribute to the ATP site. Position 530 (Asn-530) interacts with Mg(2+). Ser-532 provides a ligand contact to substrate.

The protein belongs to the FGAMS family. In terms of assembly, monomer. Part of the FGAM synthase complex composed of 1 PurL, 1 PurQ and 2 PurS subunits.

The protein resides in the cytoplasm. It catalyses the reaction N(2)-formyl-N(1)-(5-phospho-beta-D-ribosyl)glycinamide + L-glutamine + ATP + H2O = 2-formamido-N(1)-(5-O-phospho-beta-D-ribosyl)acetamidine + L-glutamate + ADP + phosphate + H(+). It functions in the pathway purine metabolism; IMP biosynthesis via de novo pathway; 5-amino-1-(5-phospho-D-ribosyl)imidazole from N(2)-formyl-N(1)-(5-phospho-D-ribosyl)glycinamide: step 1/2. Functionally, part of the phosphoribosylformylglycinamidine synthase complex involved in the purines biosynthetic pathway. Catalyzes the ATP-dependent conversion of formylglycinamide ribonucleotide (FGAR) and glutamine to yield formylglycinamidine ribonucleotide (FGAM) and glutamate. The FGAM synthase complex is composed of three subunits. PurQ produces an ammonia molecule by converting glutamine to glutamate. PurL transfers the ammonia molecule to FGAR to form FGAM in an ATP-dependent manner. PurS interacts with PurQ and PurL and is thought to assist in the transfer of the ammonia molecule from PurQ to PurL. The polypeptide is Phosphoribosylformylglycinamidine synthase subunit PurL (Erythrobacter litoralis (strain HTCC2594)).